Reading from the N-terminus, the 122-residue chain is NADH-quinone oxidoreductase subunit A (122 aa).

3 helical membrane passes run 10–30 (LIVF…LTIG), 67–87 (FALL…WAVV), and 91–111 (LGLF…IGLI).

This sequence belongs to the complex I subunit 3 family. NDH-1 is composed of 14 different subunits. Subunits NuoA, H, J, K, L, M, N constitute the membrane sector of the complex.

It localises to the cell membrane. It carries out the reaction a quinone + NADH + 5 H(+)(in) = a quinol + NAD(+) + 4 H(+)(out). NDH-1 shuttles electrons from NADH, via FMN and iron-sulfur (Fe-S) centers, to quinones in the respiratory chain. The immediate electron acceptor for the enzyme in this species is believed to be a menaquinone. Couples the redox reaction to proton translocation (for every two electrons transferred, four hydrogen ions are translocated across the cytoplasmic membrane), and thus conserves the redox energy in a proton gradient. The sequence is that of NADH-quinone oxidoreductase subunit A from Geobacillus thermodenitrificans (strain NG80-2).